A 34-amino-acid chain; its full sequence is Photosystem II reaction center protein M (34 aa).

A helical transmembrane segment spans residues 5–25 (ILGLIATTLFILIPTSFLLIL).

The protein belongs to the PsbM family. In terms of assembly, PSII is composed of 1 copy each of membrane proteins PsbA, PsbB, PsbC, PsbD, PsbE, PsbF, PsbH, PsbI, PsbJ, PsbK, PsbL, PsbM, PsbT, PsbX, PsbY, PsbZ, Psb30/Ycf12, at least 3 peripheral proteins of the oxygen-evolving complex and a large number of cofactors. It forms dimeric complexes.

It is found in the plastid. The protein resides in the chloroplast thylakoid membrane. In terms of biological role, one of the components of the core complex of photosystem II (PSII). PSII is a light-driven water:plastoquinone oxidoreductase that uses light energy to abstract electrons from H(2)O, generating O(2) and a proton gradient subsequently used for ATP formation. It consists of a core antenna complex that captures photons, and an electron transfer chain that converts photonic excitation into a charge separation. This subunit is found at the monomer-monomer interface. The sequence is that of Photosystem II reaction center protein M from Pleurastrum terricola (Filamentous green alga).